We begin with the raw amino-acid sequence, 140 residues long: uncharacterized protein (140 aa).

A run of 3 helical transmembrane segments spans residues 20 to 42, 88 to 110, and 115 to 137; these read ILYY…YVSG, FVAL…PVLL, and IIYT…GLLQ.

The protein resides in the cell membrane. This is an uncharacterized protein from Archaeoglobus fulgidus (strain ATCC 49558 / DSM 4304 / JCM 9628 / NBRC 100126 / VC-16).